Consider the following 890-residue polypeptide: DNA mismatch repair protein MutS (890 aa).

Glycine 607–serine 614 is a binding site for ATP. The disordered stretch occupies residues glutamate 832–valine 851.

Belongs to the DNA mismatch repair MutS family.

Its function is as follows. This protein is involved in the repair of mismatches in DNA. It is possible that it carries out the mismatch recognition step. This protein has a weak ATPase activity. The chain is DNA mismatch repair protein MutS from Bacillus cereus (strain 03BB102).